The following is a 176-amino-acid chain: MSRVAKAPVAIPAGVEVTLNEQTITVKGAKGSLTRVINADVSVVVENNEIKCSPAEGVTSAAQAGTARALINNMVVGVNEGFERKLTLVGVGYRAKIAGNGIDLTLGFSHPLVHQLPDGVTAECPSQTEIVLKSTDKQLVGQVAAEIRGYRPPEPYKGKGVRYADEQVRRKEAKKK.

Positions 151-170 are enriched in basic and acidic residues; sequence RPPEPYKGKGVRYADEQVRR. The tract at residues 151–176 is disordered; sequence RPPEPYKGKGVRYADEQVRRKEAKKK.

Belongs to the universal ribosomal protein uL6 family. As to quaternary structure, part of the 50S ribosomal subunit.

In terms of biological role, this protein binds to the 23S rRNA, and is important in its secondary structure. It is located near the subunit interface in the base of the L7/L12 stalk, and near the tRNA binding site of the peptidyltransferase center. The polypeptide is Large ribosomal subunit protein uL6 (Shewanella loihica (strain ATCC BAA-1088 / PV-4)).